A 162-amino-acid polypeptide reads, in one-letter code: Regulator of sigma D (162 aa).

This sequence belongs to the Rsd/AlgQ family. In terms of assembly, interacts with RpoD.

It is found in the cytoplasm. Binds RpoD and negatively regulates RpoD-mediated transcription activation by preventing the interaction between the primary sigma factor RpoD with the catalytic core of the RNA polymerase and with promoter DNA. May be involved in replacement of the RNA polymerase sigma subunit from RpoD to RpoS during the transition from exponential growth to the stationary phase. This is Regulator of sigma D from Salmonella choleraesuis (strain SC-B67).